Consider the following 207-residue polypeptide: MPQPDFRLIRLLPLAALVLTACSVTTPKGPGKSPDSPQWRQHQQDVRNLNQYQTRGAFAYISDQQKVYARFFWQQTGQDRYRLLLTNPLGSTELELNAQPGNVQLVDNKGQRYTADDAEEMIGKLTGMPIPLNSLRQWILGLPGDATDYKLDDQYRLSEITYSQNGKNWKVVYGGYDTKTQPAMPANMELTDGGQRIKLKMDNWIVK.

A signal peptide spans Met-1–Ala-21. The N-palmitoyl cysteine moiety is linked to residue Cys-22. Cys-22 is lipidated: S-diacylglycerol cysteine.

Belongs to the LolB family. In terms of assembly, monomer.

The protein localises to the cell outer membrane. In terms of biological role, plays a critical role in the incorporation of lipoproteins in the outer membrane after they are released by the LolA protein. The sequence is that of Outer-membrane lipoprotein LolB from Shigella sonnei (strain Ss046).